A 248-amino-acid polypeptide reads, in one-letter code: Large ribosomal subunit protein uL4 (248 aa).

A disordered region spans residues 45-105 (PYGADPYAGM…KDQSKSVNTK (61 aa)). Residues 92-105 (PKAEKDQSKSVNTK) are compositionally biased toward basic and acidic residues.

It belongs to the universal ribosomal protein uL4 family. Part of the 50S ribosomal subunit.

One of the primary rRNA binding proteins, this protein initially binds near the 5'-end of the 23S rRNA. It is important during the early stages of 50S assembly. It makes multiple contacts with different domains of the 23S rRNA in the assembled 50S subunit and ribosome. In terms of biological role, forms part of the polypeptide exit tunnel. This chain is Large ribosomal subunit protein uL4, found in Haloquadratum walsbyi (strain DSM 16790 / HBSQ001).